Reading from the N-terminus, the 525-residue chain is GMP synthase [glutamine-hydrolyzing] (525 aa).

Residues 9 to 207 (RILILDFGSQ…VRDICQCEAL (199 aa)) form the Glutamine amidotransferase type-1 domain. Residue C86 is the Nucleophile of the active site. Active-site residues include H181 and E183. The 193-residue stretch at 208 to 400 (WTPAKIIDDA…LGLPYDMLYR (193 aa)) folds into the GMPS ATP-PPase domain. An ATP-binding site is contributed by 235–241 (SGGVDSS).

Homodimer.

The enzyme catalyses XMP + L-glutamine + ATP + H2O = GMP + L-glutamate + AMP + diphosphate + 2 H(+). It functions in the pathway purine metabolism; GMP biosynthesis; GMP from XMP (L-Gln route): step 1/1. Functionally, catalyzes the synthesis of GMP from XMP. This is GMP synthase [glutamine-hydrolyzing] from Shigella sonnei (strain Ss046).